We begin with the raw amino-acid sequence, 425 residues long: Riboflavin biosynthesis protein RibBA (425 aa).

The DHBP synthase stretch occupies residues 1–204; the sequence is MTRLDSVERA…IADLIEWRRK (204 aa). D-ribulose 5-phosphate is bound by residues 28 to 29, aspartate 33, 141 to 145, and glutamate 165; these read RE and RPGHT. Mg(2+) is bound at residue glutamate 29. Histidine 144 contacts Mg(2+). The GTP cyclohydrolase II stretch occupies residues 205 to 425; it reads HEKHIERVAE…HLPGEFGGAL (221 aa). 259–263 lines the GTP pocket; the sequence is RVHSE. Cysteine 264, cysteine 275, and cysteine 277 together coordinate Zn(2+). GTP is bound by residues glutamine 280, 303-305, and threonine 325; that span reads EGR. Aspartate 337 (proton acceptor; for GTP cyclohydrolase activity) is an active-site residue. Arginine 339 acts as the Nucleophile; for GTP cyclohydrolase activity in catalysis. The GTP site is built by threonine 360 and lysine 365.

It in the N-terminal section; belongs to the DHBP synthase family. This sequence in the C-terminal section; belongs to the GTP cyclohydrolase II family. Mg(2+) is required as a cofactor. Requires Mn(2+) as cofactor. Zn(2+) serves as cofactor.

It catalyses the reaction D-ribulose 5-phosphate = (2S)-2-hydroxy-3-oxobutyl phosphate + formate + H(+). The enzyme catalyses GTP + 4 H2O = 2,5-diamino-6-hydroxy-4-(5-phosphoribosylamino)-pyrimidine + formate + 2 phosphate + 3 H(+). It functions in the pathway cofactor biosynthesis; riboflavin biosynthesis; 2-hydroxy-3-oxobutyl phosphate from D-ribulose 5-phosphate: step 1/1. The protein operates within cofactor biosynthesis; riboflavin biosynthesis; 5-amino-6-(D-ribitylamino)uracil from GTP: step 1/4. Catalyzes the conversion of D-ribulose 5-phosphate to formate and 3,4-dihydroxy-2-butanone 4-phosphate. In terms of biological role, catalyzes the conversion of GTP to 2,5-diamino-6-ribosylamino-4(3H)-pyrimidinone 5'-phosphate (DARP), formate and pyrophosphate. The sequence is that of Riboflavin biosynthesis protein RibBA from Mycobacterium marinum (strain ATCC BAA-535 / M).